The chain runs to 488 residues: Surface lipoprotein assembly modifier 1 (488 aa).

The signal sequence occupies residues 1-31; the sequence is MVIFYFCGKTFMPARNRWMLLLPLLASAAYA. The tract at residues 32–202 is N-terminal domain; the sequence is EETPREPDLR…LYRKALRERD (171 aa). 2 TPR repeats span residues 118–151 and 171–204; these read MLAL…QPDA and AADQ…RDAW. Positions 203-488 are C-terminal probable beta barrel, partially restores export of lipoproteins; that stretch reads AWKVNGGFSV…RAFVEFNKTF (286 aa). Beta stranded transmembrane passes span 204-214, 241-252, 257-267, 280-291, 294-304, 316-325, 330-340, 354-364, 368-377, 393-402, 407-417, 439-448, 455-464, and 478-488; these read WKVNGGFSVTR, VNYRLGAEKKWS, WYTTAGGDVSG, TAGVSGGIGFAD, KDAGLAVFHER, NGARLYFNRW, WQTLSSAEWGR, LQISNSLVFYR, QYWMGGLDFY, GLRFAWGQEW, LSSLLRLGAAK, LNTSLSLWHR, ITPRLTLSHR, and NRAFVEFNKTF.

Belongs to the Slam family. As to quaternary structure, interacts with the C-terminal domain of surface lipoprotein TbpB.

It is found in the cell outer membrane. Functionally, required for correct export to the cell surface of some cell outer membrane lipoproteins both in Neisseria and heterologously in E.coli. In Neisseria meningitidis serogroup B (strain ATCC BAA-335 / MC58), this protein is Surface lipoprotein assembly modifier 1.